The chain runs to 844 residues: Probable inorganic carbon transporter subunit DabA 1 (844 aa).

Residues Cys-359, Asp-361, His-543, and Cys-558 each contribute to the Zn(2+) site.

Belongs to the inorganic carbon transporter (TC 9.A.2) DabA family. As to quaternary structure, forms a complex with DabB. Zn(2+) is required as a cofactor.

The protein resides in the cell inner membrane. Functionally, part of an energy-coupled inorganic carbon pump. The protein is Probable inorganic carbon transporter subunit DabA 1 of Bradyrhizobium sp. (strain BTAi1 / ATCC BAA-1182).